The primary structure comprises 203 residues: Proteasome subunit beta 2 (203 aa).

Residues 1–10 (MNLQNKILKG) constitute a propeptide, removed in mature form; by autocatalysis. Residue T11 is the Nucleophile of the active site.

This sequence belongs to the peptidase T1B family. In terms of assembly, the 20S proteasome core is composed of 14 alpha and 14 beta subunits that assemble into four stacked heptameric rings, resulting in a barrel-shaped structure. The two inner rings, each composed of seven catalytic beta subunits, are sandwiched by two outer rings, each composed of seven alpha subunits. The catalytic chamber with the active sites is on the inside of the barrel. Has a gated structure, the ends of the cylinder being occluded by the N-termini of the alpha-subunits. Is capped at one or both ends by the proteasome regulatory ATPase, PAN.

The protein localises to the cytoplasm. The catalysed reaction is Cleavage of peptide bonds with very broad specificity.. The formation of the proteasomal ATPase PAN-20S proteasome complex, via the docking of the C-termini of PAN into the intersubunit pockets in the alpha-rings, triggers opening of the gate for substrate entry. Interconversion between the open-gate and close-gate conformations leads to a dynamic regulation of the 20S proteasome proteolysis activity. Component of the proteasome core, a large protease complex with broad specificity involved in protein degradation. The chain is Proteasome subunit beta 2 from Sulfolobus acidocaldarius (strain ATCC 33909 / DSM 639 / JCM 8929 / NBRC 15157 / NCIMB 11770).